We begin with the raw amino-acid sequence, 1322 residues long: Chitin synthase chs-1 (1322 aa).

Residues 1–39 (MNDGENYWNAFRSHKRSATDGPTLSPWMVTVLQATKLLL) lie on the Extracellular side of the membrane. Residues 40–60 (FALCNIVLTLGSVFSKLIVLI) traverse the membrane as a helical segment. Residues 61–128 (MATNIVPRAH…KGQCGQLVKS (68 aa)) are Cytoplasmic-facing. A helical membrane pass occupies residues 129–149 (VVVLESLRAIGLAVLSFHVFP). At 150-156 (QLDLARC) the chain is on the extracellular side. A helical membrane pass occupies residues 157–177 (LVLSACFPLVAVLQRSLVAMV). At 178 to 193 (SAARTGRSFRNRLGRC) the chain is on the cytoplasmic side. Residues 194-214 (FVAIPHVIMFLVLMSSCYVWA) traverse the membrane as a helical segment. Residues 215–221 (LFDNKFT) are Extracellular-facing. The chain crosses the membrane as a helical span at residues 222–242 (AIIALPIGVICTSAGFWESWI). Residues 243-269 (DTTHSGTSFDELYRLKYAVRKMNTTTK) are Cytoplasmic-facing. Residues 270 to 290 (LIVSLMRIVCTVSVLVSAVYI) traverse the membrane as a helical segment. The Extracellular segment spans residues 291–316 (NDHKKLNSSHFVKAFFSFSTRQPHTR). An N-linked (GlcNAc...) asparagine glycan is attached at asparagine 297. The chain crosses the membrane as a helical span at residues 317 to 337 (LLLLATGIIVLHFVMRGISRF). Residues 338–342 (LAALD) lie on the Cytoplasmic side of the membrane. A helical transmembrane segment spans residues 343–363 (LHPFSFVHPLSIAPLIAYGYV). At 364–396 (RYACQSPTCSIARRLARFGLHWVCDQWFQSARG) the chain is on the extracellular side. The chain crosses the membrane as a helical span at residues 397 to 417 (IASPDFYICLIWLLVGCYRGW). Residues 418–836 (RLVRQRYFDT…AISYAYIAYQ (419 aa)) are Cytoplasmic-facing. The stretch at 455–486 (LNRQEKTMLTEEEDISDENDELRIRNDEVDRV) forms a coiled coil. A helical transmembrane segment spans residues 837–857 (FLVIFFSMLGPAIIFTMLVFA). Topologically, residues 858-865 (QVAAFELR) are extracellular. A helical transmembrane segment spans residues 866-886 (GSDVMLYNGIPIGFFIVLCFT). Residues 887–892 (TESNIQ) lie on the Cytoplasmic side of the membrane. The helical transmembrane segment at 893 to 913 (LIYAKYMSIAYAFVMLAVLVA) threads the bilayer. Residues 914–922 (TSSQIVLET) lie on the Extracellular side of the membrane. A helical transmembrane segment spans residues 923 to 943 (VLAPTSLFIVTMVGIFFFAAC). Topologically, residues 944-951 (LHPKEFTN) are cytoplasmic. A helical membrane pass occupies residues 952–972 (IIHGVVFFLMIPSTYVFLTLY). At 973-1148 (SLINLNVITW…AVAEGLASLR (176 aa)) the chain is on the extracellular side. The stretch at 1019-1053 (ISCREKKEHEERREKMEKKMQRMELALRSIESGAD) forms a coiled coil. A helical membrane pass occupies residues 1149 to 1169 (NQIAFTILLVNSLLALAIFLI). At 1170 to 1209 (QKHKNVLSIKFSPIKNFRWTKMNEMTGQYEETDEPLKIDP) the chain is on the cytoplasmic side. The helical transmembrane segment at 1210–1230 (LGMGIVVFLLIILFVQTLGML) threads the bilayer. Residues 1231 to 1322 (LHRLNTMIGA…MQRSALSTTE (92 aa)) are Extracellular-facing.

The protein belongs to the chitin synthase family. Class IV subfamily.

The protein localises to the cell membrane. It carries out the reaction [(1-&gt;4)-N-acetyl-beta-D-glucosaminyl](n) + UDP-N-acetyl-alpha-D-glucosamine = [(1-&gt;4)-N-acetyl-beta-D-glucosaminyl](n+1) + UDP + H(+). Functionally, essential for the embryonic synthesis of chitin, a component of the eggshell. In Caenorhabditis elegans, this protein is Chitin synthase chs-1.